Consider the following 101-residue polypeptide: uncharacterized protein (101 aa).

The interval 76 to 101 is disordered; that stretch reads KGNVTRRRKKTHLGNDDGKKEAQEKM. Positions 88-101 are enriched in basic and acidic residues; it reads LGNDDGKKEAQEKM.

This is an uncharacterized protein from Homo sapiens (Human).